Consider the following 1201-residue polypeptide: Vitamin B12-dependent ribonucleotide reductase (1201 aa).

Residues Ser-153, 198-199 (AC), Gly-230, 482-486 (NPCSE), and 683-687 (PTGTI) contribute to the substrate site. A disulfide bridge links Cys-199 with Cys-495. Asn-482 acts as the Proton acceptor in catalysis. Cys-484 serves as the catalytic Cysteine radical intermediate. Catalysis depends on Glu-486, which acts as the Proton acceptor. Residues 1100-1118 (DEIGSKRATAESNGQEKET) are compositionally biased toward basic and acidic residues. Residues 1100 to 1120 (DEIGSKRATAESNGQEKETLS) are disordered.

It belongs to the ribonucleoside diphosphate reductase class-2 family. Adenosylcob(III)alamin serves as cofactor.

The enzyme catalyses a 2'-deoxyribonucleoside 5'-diphosphate + [thioredoxin]-disulfide + H2O = a ribonucleoside 5'-diphosphate + [thioredoxin]-dithiol. Catalyzes the reduction of ribonucleotides to deoxyribonucleotides. May function to provide a pool of deoxyribonucleotide precursors for DNA repair during oxygen limitation and/or for immediate growth after restoration of oxygen. This Leptospira interrogans serogroup Icterohaemorrhagiae serovar Lai (strain 56601) protein is Vitamin B12-dependent ribonucleotide reductase (nrdJ).